Consider the following 41-residue polypeptide: uncharacterized protein (41 aa).

It is found in the plastid. It localises to the chloroplast. This is an uncharacterized protein from Trieres chinensis (Marine centric diatom).